Consider the following 93-residue polypeptide: Phosphoribosyl-ATP pyrophosphatase (93 aa).

This sequence belongs to the PRA-PH family.

It localises to the cytoplasm. It carries out the reaction 1-(5-phospho-beta-D-ribosyl)-ATP + H2O = 1-(5-phospho-beta-D-ribosyl)-5'-AMP + diphosphate + H(+). The protein operates within amino-acid biosynthesis; L-histidine biosynthesis; L-histidine from 5-phospho-alpha-D-ribose 1-diphosphate: step 2/9. The protein is Phosphoribosyl-ATP pyrophosphatase of Corynebacterium aurimucosum (strain ATCC 700975 / DSM 44827 / CIP 107346 / CN-1) (Corynebacterium nigricans).